The chain runs to 187 residues: Large ribosomal subunit protein uL22 (187 aa).

Positions 161 to 187 (APTDDAPAKKKLSKKKLARQKEKMMRE) are disordered. The segment covering 169-178 (KKKLSKKKLA) has biased composition (basic residues).

This sequence belongs to the universal ribosomal protein uL22 family.

The protein is Large ribosomal subunit protein uL22 (RpL17) of Bombyx mori (Silk moth).